Here is a 488-residue protein sequence, read N- to C-terminus: Cysteine desulfurase, mitochondrial (488 aa).

A disordered region spans residues 25-52 (LPKPLATSSSPATNAPNKTSNPKTGELH). The span at 30–47 (ATSSSPATNAPNKTSNPK) shows a compositional bias: polar residues. Residues 157–158 (AT), Asn-237, Gln-265, and 285–287 (SSH) contribute to the pyridoxal 5'-phosphate site. Position 288 is an N6-(pyridoxal phosphate)lysine (Lys-288). Thr-325 provides a ligand contact to pyridoxal 5'-phosphate. The active-site Cysteine persulfide intermediate is the Cys-412. Residue Cys-412 participates in [2Fe-2S] cluster binding.

Belongs to the class-V pyridoxal-phosphate-dependent aminotransferase family. NifS/IscS subfamily. Pyridoxal 5'-phosphate serves as cofactor.

It localises to the mitochondrion. It catalyses the reaction (sulfur carrier)-H + L-cysteine = (sulfur carrier)-SH + L-alanine. In terms of biological role, catalyzes the removal of elemental sulfur from cysteine to produce alanine. It supplies the inorganic sulfur for iron-sulfur (Fe-S) clusters. Plays a role in both tRNA-processing and mitochondrial metabolism. Involved in the 2-thio-modification of both 5-carboxymethylaminomethyl-2-thiouridine in mitochondrial tRNAs and 5-methoxycarbonylmethyl-2-thiouridine (mcm5s2U) in cytoplasmic tRNAs. The polypeptide is Cysteine desulfurase, mitochondrial (NFS1) (Candida albicans (strain SC5314 / ATCC MYA-2876) (Yeast)).